A 303-amino-acid polypeptide reads, in one-letter code: Cobalamin biosynthesis protein CobD (303 aa).

4 helical membrane passes run 65 to 85, 147 to 167, 235 to 255, and 283 to 303; these read LLAW…IVLL, DAVF…VVLY, AGPV…GAAI, and LVWA…WLYA.

It belongs to the CobD/CbiB family.

Its subcellular location is the cell membrane. The protein operates within cofactor biosynthesis; adenosylcobalamin biosynthesis. Functionally, converts cobyric acid to cobinamide by the addition of aminopropanol on the F carboxylic group. The sequence is that of Cobalamin biosynthesis protein CobD from Stutzerimonas stutzeri (strain A1501) (Pseudomonas stutzeri).